A 266-amino-acid chain; its full sequence is Anamorsin homolog (266 aa).

Residues 1–164 (MIINFVGNTL…NITAENPDFL (164 aa)) are N-terminal SAM-like domain. The linker stretch occupies residues 165–185 (SNEDNDVSSDDEDLYNNEDDK). [4Fe-4S] cluster-binding residues include Cys229, Cys232, Cys240, and Cys243. 2 short sequence motifs (cx2C motif) span residues 229–232 (CGNC) and 240–243 (CASC). The tract at residues 229 to 243 (CGNCYLGDAFRCASC) is fe-S binding site B.

The protein belongs to the anamorsin family. Monomer. It depends on [4Fe-4S] cluster as a cofactor.

It is found in the cytoplasm. The protein resides in the mitochondrion intermembrane space. Component of the cytosolic iron-sulfur (Fe-S) protein assembly (CIA) machinery. Required for the maturation of extramitochondrial Fe-S proteins. Part of an electron transfer chain functioning in an early step of cytosolic Fe-S biogenesis, facilitating the de novo assembly of a [4Fe-4S] cluster on the cytosolic Fe-S scaffold complex. Electrons are transferred from NADPH via a FAD- and FMN-containing diflavin oxidoreductase. Together with the diflavin oxidoreductase, also required for the assembly of the diferric tyrosyl radical cofactor of ribonucleotide reductase (RNR), probably by providing electrons for reduction during radical cofactor maturation in the catalytic small subunit. This is Anamorsin homolog from Plasmodium falciparum (isolate 3D7).